The following is a 651-amino-acid chain: Probable potassium transport system protein Kup (651 aa).

12 helical membrane-spanning segments follow: residues 41–61 (LVLG…IYAF), 82–102 (VVSF…VLFV), 130–150 (LILG…VITP), 163–183 (IVAP…LVTL), 194–214 (VAIV…ASGL), 235–255 (FLTV…LAMT), 276–296 (WLWI…AFIL), 309–329 (MIPS…TVIA), 366–386 (IYIP…VLGF), 395–415 (AYGI…YIVM), 426–446 (ALPI…ANII), and 450–470 (EGGW…WTWV).

The protein belongs to the HAK/KUP transporter (TC 2.A.72) family.

Its subcellular location is the cell inner membrane. It catalyses the reaction K(+)(in) + H(+)(in) = K(+)(out) + H(+)(out). Functionally, transport of potassium into the cell. Likely operates as a K(+):H(+) symporter. This Brucella ovis (strain ATCC 25840 / 63/290 / NCTC 10512) protein is Probable potassium transport system protein Kup.